A 638-amino-acid polypeptide reads, in one-letter code: Threonine--tRNA ligase (638 aa).

Residues 1-61 (MPLITLPDGN…DKDCSVKIFT (61 aa)) enclose the TGS domain. Residues 243-535 (DHRKLGKEMD…LIENYAGKFP (293 aa)) form a catalytic region. Zn(2+)-binding residues include Cys-335, His-386, and His-512.

It belongs to the class-II aminoacyl-tRNA synthetase family. Homodimer. Requires Zn(2+) as cofactor.

The protein resides in the cytoplasm. The catalysed reaction is tRNA(Thr) + L-threonine + ATP = L-threonyl-tRNA(Thr) + AMP + diphosphate + H(+). Functionally, catalyzes the attachment of threonine to tRNA(Thr) in a two-step reaction: L-threonine is first activated by ATP to form Thr-AMP and then transferred to the acceptor end of tRNA(Thr). Also edits incorrectly charged L-seryl-tRNA(Thr). This chain is Threonine--tRNA ligase, found in Pelagibacter ubique (strain HTCC1062).